Here is a 1412-residue protein sequence, read N- to C-terminus: DNA-directed RNA polymerase subunit beta' (1412 aa).

Positions 70, 72, 85, and 88 each coordinate Zn(2+). Residues D460, D462, and D464 each contribute to the Mg(2+) site. Zn(2+)-binding residues include C819, C893, C900, and C903. The interval 1393-1412 is disordered; that stretch reads EAFEFGTPSAPAEEPQHPAE.

This sequence belongs to the RNA polymerase beta' chain family. As to quaternary structure, the RNAP catalytic core consists of 2 alpha, 1 beta, 1 beta' and 1 omega subunit. When a sigma factor is associated with the core the holoenzyme is formed, which can initiate transcription. Mg(2+) serves as cofactor. It depends on Zn(2+) as a cofactor.

The enzyme catalyses RNA(n) + a ribonucleoside 5'-triphosphate = RNA(n+1) + diphosphate. In terms of biological role, DNA-dependent RNA polymerase catalyzes the transcription of DNA into RNA using the four ribonucleoside triphosphates as substrates. This is DNA-directed RNA polymerase subunit beta' from Burkholderia mallei (strain NCTC 10229).